We begin with the raw amino-acid sequence, 976 residues long: Vacuolar membrane protease (976 aa).

At 1 to 15 (MKLKSVFRSVLKYRK) the chain is on the cytoplasmic side. Residues 16-36 (TNLSLLLLITYSIITLLYIFD) form a helical membrane-spanning segment. The Vacuolar portion of the chain corresponds to 37 to 359 (HERYKLNLPK…KFFVISAKTL (323 aa)). 2 N-linked (GlcNAc...) asparagine glycosylation sites follow: N96 and N121. Positions 156 and 168 each coordinate Zn(2+). N189 is a glycosylation site (N-linked (GlcNAc...) asparagine). E200 (proton acceptor) is an active-site residue. Zn(2+) is bound at residue E201. Residues N212 and N217 are each glycosylated (N-linked (GlcNAc...) asparagine). Zn(2+) is bound by residues E226 and H300. The chain crosses the membrane as a helical span at residues 360 to 380 (FYWNCIFLLVSPVVAIGLYLI). The Cytoplasmic segment spans residues 381–392 (SRDRMTWKSHSW). The helical transmembrane segment at 393 to 412 (LSWTRFPLSLAAGIIVQKLF) threads the bilayer. The Vacuolar portion of the chain corresponds to 413 to 428 (SNDIIRSNPLTFSRNY). Residues 429-449 (FWPISAFFTQVIFTSYVLINC) traverse the membrane as a helical segment. The Cytoplasmic segment spans residues 450-461 (SNFFFPCADMKS). The helical transmembrane segment at 462-482 (LSIIELFIILWTILLFTSKLL) threads the bilayer. Topologically, residues 483-496 (YSSDYRYTGLYPLS) are vacuolar. A helical transmembrane segment spans residues 497-517 (IFFLLSTIAAILRLLALALGM). Residues 518–627 (RTRKRLGREC…NSLKLEYTDY (110 aa)) are Cytoplasmic-facing. Residues 528 to 610 (RDHHSNYSSH…PLLKGSNSME (83 aa)) form a disordered region. A compositionally biased stretch (polar residues) spans 549–558 (NLEQPQDQFT). The span at 559-570 (SSQDDQASIQDD) shows a compositional bias: low complexity. Basic and acidic residues predominate over residues 582 to 601 (NVDEDHGMDSSSQQHDERVP). The helical transmembrane segment at 628–648 (AWIIQFLLIVPIPSFILFNSV) threads the bilayer. At 649–668 (DVIMDALNHTVQEGSKATFD) the chain is on the vacuolar side. N656 is a glycosylation site (N-linked (GlcNAc...) asparagine). A helical transmembrane segment spans residues 669–689 (VLRFGMVGSILMALPILPFFY). The Cytoplasmic portion of the chain corresponds to 690–692 (KVN). Residues 693 to 713 (YITISLTALLFLISASKTLLV) form a helical membrane-spanning segment. Topologically, residues 714–976 (HPFTNSNPLK…LVIVKDAIIL (263 aa)) are vacuolar. N-linked (GlcNAc...) asparagine glycans are attached at residues N768, N796, N811, N866, and N937.

The protein belongs to the peptidase M28 family. Zn(2+) serves as cofactor.

It localises to the vacuole membrane. Its function is as follows. May be involved in vacuolar sorting and osmoregulation. In Saccharomyces cerevisiae (strain YJM789) (Baker's yeast), this protein is Vacuolar membrane protease.